The sequence spans 317 residues: Ribosomal RNA small subunit methyltransferase H (317 aa).

S-adenosyl-L-methionine-binding positions include 39–41, D59, F83, D104, and Q111; that span reads GGH.

The protein belongs to the methyltransferase superfamily. RsmH family.

It localises to the cytoplasm. It carries out the reaction cytidine(1402) in 16S rRNA + S-adenosyl-L-methionine = N(4)-methylcytidine(1402) in 16S rRNA + S-adenosyl-L-homocysteine + H(+). Specifically methylates the N4 position of cytidine in position 1402 (C1402) of 16S rRNA. In Paraburkholderia phymatum (strain DSM 17167 / CIP 108236 / LMG 21445 / STM815) (Burkholderia phymatum), this protein is Ribosomal RNA small subunit methyltransferase H.